Consider the following 514-residue polypeptide: Peptide chain release factor 3 (514 aa).

The 261-residue stretch at 8–268 folds into the tr-type G domain; it reads KKRRTFAIIS…TFLEFAPEPH (261 aa). GTP contacts are provided by residues 17-24, 85-89, and 139-142; these read SHPDAGKT, DTPGH, and NKLD.

This sequence belongs to the TRAFAC class translation factor GTPase superfamily. Classic translation factor GTPase family. PrfC subfamily.

It localises to the cytoplasm. Increases the formation of ribosomal termination complexes and stimulates activities of RF-1 and RF-2. It binds guanine nucleotides and has strong preference for UGA stop codons. It may interact directly with the ribosome. The stimulation of RF-1 and RF-2 is significantly reduced by GTP and GDP, but not by GMP. This Streptococcus pyogenes serotype M28 (strain MGAS6180) protein is Peptide chain release factor 3.